A 161-amino-acid chain; its full sequence is uncharacterized protein (161 aa).

This is an uncharacterized protein from Escherichia coli (strain K12).